A 175-amino-acid polypeptide reads, in one-letter code: Gamma-crystallin M1 (175 aa).

4 consecutive Beta/gamma crystallin 'Greek key' domains span residues 2–40 (GKIIFYEDRNFQGRSYECMSDCSDITTYMSRCQSCRVES), 41–86 (GCFM…RYPY), 89–121 (FRMRIYEREYFGGQMSELMGDCDSIMDRFRMSD), and 130–172 (GHWL…RRIT).

This sequence belongs to the beta/gamma-crystallin family. As to quaternary structure, monomer.

Crystallins are the dominant structural components of the vertebrate eye lens. This is Gamma-crystallin M1 (GM1) from Chiloscyllium indicum (Slender bamboo shark).